A 610-amino-acid chain; its full sequence is UvrABC system protein C (610 aa).

The 79-residue stretch at 16–94 folds into the GIY-YIG domain; that stretch reads HQPGVYRMYN…IKQYLPKYNV (79 aa). The UVR domain maps to 204-239; it reads QQVLKQLIEKMEVASQQLRFEDAAKFRDQIQAIRRV.

Belongs to the UvrC family. Interacts with UvrB in an incision complex.

Its subcellular location is the cytoplasm. The UvrABC repair system catalyzes the recognition and processing of DNA lesions. UvrC both incises the 5' and 3' sides of the lesion. The N-terminal half is responsible for the 3' incision and the C-terminal half is responsible for the 5' incision. The protein is UvrABC system protein C of Vibrio parahaemolyticus serotype O3:K6 (strain RIMD 2210633).